Consider the following 391-residue polypeptide: MNKIGVLLMNLGGPERITDVGPFLYNLFSDPEIIRTPFPAFQKPLAWLISTLRSTTSQQAYLSIGGGSPIRRITEQQARELQSKLREKGLNATTYIAMRYWHPFTESAIADMKADCVDQIVVLPLYPHFSISTSGSSFRELKKLRDSDNDFKKIPMRCVRSWFSQSGYLKSMVELISQQISCCESPPNAHIFFTAHGVPKSYVEEAGDPYKQQIEDCSLLIINELEKYLGHSNPHTLSYQSRVGPVEWLKPYTEEVLADLGKSNVEDLIVVPISFVGEHIETLQEIDIEYKEIAEKAGIKNFRRVKALNTHPTFIEGLSDLVISCLEEPQVNIEEASKLPEKVKLYPQEKWQWGWNNSSEVWNGRVAMIVFLVLFIELIAGSGPLHRLGIL.

Residues H196 and E281 each coordinate Fe cation.

This sequence belongs to the ferrochelatase family.

It localises to the cytoplasm. It carries out the reaction heme b + 2 H(+) = protoporphyrin IX + Fe(2+). It functions in the pathway porphyrin-containing compound metabolism; protoheme biosynthesis; protoheme from protoporphyrin-IX: step 1/1. Catalyzes the ferrous insertion into protoporphyrin IX. The polypeptide is Ferrochelatase (Prochlorococcus marinus (strain MIT 9312)).